The primary structure comprises 124 residues: LOB domain-containing protein 9 (124 aa).

Positions 11-113 (APCALCTTKN…IYLNELKEKI (103 aa)) constitute an LOB domain.

The protein belongs to the LOB domain-containing protein family.

This Arabidopsis thaliana (Mouse-ear cress) protein is LOB domain-containing protein 9 (LBD9).